The following is a 240-amino-acid chain: CRISPR-associated protein Cas5 3 (240 aa).

This sequence belongs to the CRISPR-associated protein Cas5 family. Subtype I-A/Apern subfamily. In terms of assembly, part of the aCascade ribonucleoprotein complex.

Functionally, CRISPR (clustered regularly interspaced short palindromic repeat) is an adaptive immune system that provides protection against mobile genetic elements (viruses, transposable elements and conjugative plasmids). CRISPR clusters contain spacers, sequences complementary to antecedent mobile elements, and target invading nucleic acids. CRISPR clusters are transcribed and processed into CRISPR RNA (crRNA). This is CRISPR-associated protein Cas5 3 (cas5c) from Saccharolobus solfataricus (strain ATCC 35092 / DSM 1617 / JCM 11322 / P2) (Sulfolobus solfataricus).